The sequence spans 467 residues: UDP-N-acetylmuramate--L-alanine ligase (467 aa).

112-118 (GTHGKTT) is an ATP binding site.

Belongs to the MurCDEF family.

It localises to the cytoplasm. It carries out the reaction UDP-N-acetyl-alpha-D-muramate + L-alanine + ATP = UDP-N-acetyl-alpha-D-muramoyl-L-alanine + ADP + phosphate + H(+). It functions in the pathway cell wall biogenesis; peptidoglycan biosynthesis. Cell wall formation. In Paraburkholderia phytofirmans (strain DSM 17436 / LMG 22146 / PsJN) (Burkholderia phytofirmans), this protein is UDP-N-acetylmuramate--L-alanine ligase.